We begin with the raw amino-acid sequence, 248 residues long: Endonuclease V (248 aa).

Residues Asp54 and Asp118 each coordinate Mg(2+).

The protein belongs to the endonuclease V family. Mg(2+) serves as cofactor.

It localises to the cytoplasm. It carries out the reaction Endonucleolytic cleavage at apurinic or apyrimidinic sites to products with a 5'-phosphate.. Functionally, DNA repair enzyme involved in the repair of deaminated bases. Selectively cleaves double-stranded DNA at the second phosphodiester bond 3' to a deoxyinosine leaving behind the intact lesion on the nicked DNA. In Natronomonas pharaonis (strain ATCC 35678 / DSM 2160 / CIP 103997 / JCM 8858 / NBRC 14720 / NCIMB 2260 / Gabara) (Halobacterium pharaonis), this protein is Endonuclease V.